A 239-amino-acid chain; its full sequence is uncharacterized protein (239 aa).

The interval 129-155 (DSLDDEDDNMISSNDPTKSPEEHDTTT) is disordered. Serine 160 is subject to Phosphoserine.

This is an uncharacterized protein from Schizosaccharomyces pombe (strain 972 / ATCC 24843) (Fission yeast).